A 121-amino-acid chain; its full sequence is Dihydroneopterin aldolase (121 aa).

Substrate-binding positions include E22, Y54, and 73–74; that span reads IE. K100 acts as the Proton donor/acceptor in catalysis.

Belongs to the DHNA family. As to quaternary structure, homooctamer. Four molecules assemble into a ring, and two rings come together to give a cylinder with a hole of at least 13 a diameter.

It carries out the reaction 7,8-dihydroneopterin = 6-hydroxymethyl-7,8-dihydropterin + glycolaldehyde. The catalysed reaction is 7,8-dihydroneopterin = 7,8-dihydromonapterin. The protein operates within cofactor biosynthesis; tetrahydrofolate biosynthesis; 2-amino-4-hydroxy-6-hydroxymethyl-7,8-dihydropteridine diphosphate from 7,8-dihydroneopterin triphosphate: step 3/4. Functionally, catalyzes the conversion of 7,8-dihydroneopterin to 6-hydroxymethyl-7,8-dihydropterin. Can also catalyze the epimerization of carbon 2' of dihydroneopterin to dihydromonapterin. This Staphylococcus epidermidis (strain ATCC 35984 / DSM 28319 / BCRC 17069 / CCUG 31568 / BM 3577 / RP62A) protein is Dihydroneopterin aldolase (folB).